The following is a 257-amino-acid chain: Phosphonates import ATP-binding protein PhnC 1 (257 aa).

Residues 2–246 (LKITNLTKRY…EMDTIYAGVP (245 aa)) form the ABC transporter domain. 35–42 (GSSGAGKS) provides a ligand contact to ATP.

It belongs to the ABC transporter superfamily. Phosphonates importer (TC 3.A.1.9.1) family. In terms of assembly, the complex is composed of two ATP-binding proteins (PhnC), two transmembrane proteins (PhnE) and a solute-binding protein (PhnD).

It localises to the cell inner membrane. The catalysed reaction is phosphonate(out) + ATP + H2O = phosphonate(in) + ADP + phosphate + H(+). Its function is as follows. Part of the ABC transporter complex PhnCDE involved in phosphonates import. Responsible for energy coupling to the transport system. This Ruegeria sp. (strain TM1040) (Silicibacter sp.) protein is Phosphonates import ATP-binding protein PhnC 1.